A 141-amino-acid polypeptide reads, in one-letter code: Large ribosomal subunit protein uL13 (141 aa).

Belongs to the universal ribosomal protein uL13 family. Part of the 50S ribosomal subunit.

In terms of biological role, this protein is one of the early assembly proteins of the 50S ribosomal subunit, although it is not seen to bind rRNA by itself. It is important during the early stages of 50S assembly. This is Large ribosomal subunit protein uL13 from Helicobacter acinonychis (strain Sheeba).